A 154-amino-acid chain; its full sequence is Egg-lysin (154 aa).

The N-terminal stretch at 1–18 (MKLLVLWVFAMMATVAMS) is a signal peptide.

As to quaternary structure, monomer. Homodimer. Molecules associate into dimers and then rapidly dissociate again. Interacts (as a monomer) with the egg vitelline layer protein VERL (via VERL repeats); each VERL chain can bind multiple copies of lysin. Sperm.

It localises to the cytoplasmic vesicle. Its subcellular location is the secretory vesicle. The protein localises to the acrosome lumen. Its function is as follows. Creates a 3 um hole in the egg vitelline layer through which the sperm passes. Does not have enzyme activity. Species-specific interaction between the sperm protein lysin and the egg protein VERL exposes a basic surface on lysin that may dissociate the egg vitelline layer via electrostatic repulsion. Plays a role in ensuring species-specific fertilization. This Haliotis fulgens (Green abalone) protein is Egg-lysin.